The chain runs to 172 residues: MKLGIVIFPSKMIQDKANGLRKRYDPHYALVPPHITLKTPFETQDEQLESIVNELHTIASKTNPFTLHVGKVGSFAPVNNVIYFKVEKTPELTFLNEEMHNGFFTQEREYAFVPHLTIGQGLSDAEHADVLGRLRMKDFYYEQPIDRFHLLYQLENGTWTVHETFRLGKGNN.

Catalysis depends on His34, which acts as the Proton donor. 2 short sequence motifs (HXTX) span residues 34-37 (HITL) and 115-118 (HLTI). Catalysis depends on His115, which acts as the Proton acceptor.

The protein belongs to the 2H phosphoesterase superfamily. YjcG family.

This is Putative phosphoesterase BCAH820_1309 from Bacillus cereus (strain AH820).